Here is a 210-residue protein sequence, read N- to C-terminus: Interleukin-6 (210 aa).

Residues 1-25 (MNSLSTSAFSPVAFSLGLLLVMATA) form the signal peptide. Cys72 and Cys78 are disulfide-bonded. The residue at position 81 (Ser81) is a Phosphoserine. A disulfide bond links Cys101 and Cys111.

The protein belongs to the IL-6 superfamily. As to quaternary structure, component of a hexamer of two molecules each of IL6, IL6R and IL6ST; first binds to IL6R to associate with the signaling subunit IL6ST. Interacts with IL6R (via the N-terminal ectodomain); this interaction may be affected by IL6R-binding with SORL1, hence decreasing IL6 cis signaling. Interacts with SORL1 (via the N-terminal ectodomain); this interaction leads to IL6 internalization and lysosomal degradation. May form a trimeric complex with the soluble SORL1 ectodomain and soluble IL6R receptor; this interaction might stabilize circulating IL6, hence promoting IL6 trans signaling.

Its subcellular location is the secreted. In terms of biological role, cytokine with a wide variety of biological functions in immunity, tissue regeneration, and metabolism. Binds to IL6R, then the complex associates to the signaling subunit IL6ST/gp130 to trigger the intracellular IL6-signaling pathway. The interaction with the membrane-bound IL6R and IL6ST stimulates 'classic signaling', whereas the binding of IL6 and soluble IL6R to IL6ST stimulates 'trans-signaling'. Alternatively, 'cluster signaling' occurs when membrane-bound IL6:IL6R complexes on transmitter cells activate IL6ST receptors on neighboring receiver cells. IL6 is a potent inducer of the acute phase response. Rapid production of IL6 contributes to host defense during infection and tissue injury, but excessive IL6 synthesis is involved in disease pathology. In the innate immune response, is synthesized by myeloid cells, such as macrophages and dendritic cells, upon recognition of pathogens through toll-like receptors (TLRs) at the site of infection or tissue injury. In the adaptive immune response, is required for the differentiation of B cells into immunoglobulin-secreting cells. Plays a major role in the differentiation of CD4(+) T cell subsets. Essential factor for the development of T follicular helper (Tfh) cells that are required for the induction of germinal-center formation. Required to drive naive CD4(+) T cells to the Th17 lineage. Also required for proliferation of myeloma cells and the survival of plasmablast cells. Functionally, acts as an essential factor in bone homeostasis and on vessels directly or indirectly by induction of VEGF, resulting in increased angiogenesis activity and vascular permeability. Induces, through 'trans-signaling' and synergistically with IL1B and TNF, the production of VEGF. Involved in metabolic controls, is discharged into the bloodstream after muscle contraction increasing lipolysis and improving insulin resistance. 'Trans-signaling' in central nervous system also regulates energy and glucose homeostasis. Mediates, through GLP-1, crosstalk between insulin-sensitive tissues, intestinal L cells and pancreatic islets to adapt to changes in insulin demand. Also acts as a myokine. Plays a protective role during liver injury, being required for maintenance of tissue regeneration. Also has a pivotal role in iron metabolism by regulating HAMP/hepcidin expression upon inflammation or bacterial infection. Through activation of IL6ST-YAP-NOTCH pathway, induces inflammation-induced epithelial regeneration. The sequence is that of Interleukin-6 (IL6) from Mustela putorius furo (European domestic ferret).